The chain runs to 451 residues: Phosphoglucosamine mutase (451 aa).

Ser102 (phosphoserine intermediate) is an active-site residue. Mg(2+)-binding residues include Ser102, Asp243, Asp245, and Asp247. Ser102 carries the post-translational modification Phosphoserine.

It belongs to the phosphohexose mutase family. It depends on Mg(2+) as a cofactor. Activated by phosphorylation.

The enzyme catalyses alpha-D-glucosamine 1-phosphate = D-glucosamine 6-phosphate. In terms of biological role, catalyzes the conversion of glucosamine-6-phosphate to glucosamine-1-phosphate. The chain is Phosphoglucosamine mutase from Chelativorans sp. (strain BNC1).